Reading from the N-terminus, the 384-residue chain is ATP phosphoribosyltransferase regulatory subunit (384 aa).

The protein belongs to the class-II aminoacyl-tRNA synthetase family. HisZ subfamily. In terms of assembly, heteromultimer composed of HisG and HisZ subunits.

The protein resides in the cytoplasm. Its pathway is amino-acid biosynthesis; L-histidine biosynthesis; L-histidine from 5-phospho-alpha-D-ribose 1-diphosphate: step 1/9. Required for the first step of histidine biosynthesis. May allow the feedback regulation of ATP phosphoribosyltransferase activity by histidine. This is ATP phosphoribosyltransferase regulatory subunit from Rhodospirillum rubrum (strain ATCC 11170 / ATH 1.1.1 / DSM 467 / LMG 4362 / NCIMB 8255 / S1).